The sequence spans 209 residues: Large ribosomal subunit protein uL3 (209 aa).

An N5-methylglutamine modification is found at Gln150.

Belongs to the universal ribosomal protein uL3 family. Part of the 50S ribosomal subunit. Forms a cluster with proteins L14 and L19. Methylated by PrmB.

Functionally, one of the primary rRNA binding proteins, it binds directly near the 3'-end of the 23S rRNA, where it nucleates assembly of the 50S subunit. This is Large ribosomal subunit protein uL3 from Buchnera aphidicola subsp. Acyrthosiphon pisum (strain 5A).